Here is a 902-residue protein sequence, read N- to C-terminus: Cytosolic 10-formyltetrahydrofolate dehydrogenase (902 aa).

The interval 1–310 (MKIAVIGQSL…PASQFFKGSA (310 aa)) is hydrolase domain. At Ser9 the chain carries Phosphoserine. N6-succinyllysine is present on Lys38. Residue 88 to 90 (QFI) participates in (6R)-10-formyltetrahydrofolate binding. Residue His106 is the Proton donor of the active site. Asp142 provides a ligand contact to (6R)-10-formyltetrahydrofolate. Residues 318–395 (EEELATAEAV…DFIQLLVRKL (78 aa)) enclose the Carrier domain. An O-(pantetheine 4'-phosphoryl)serine modification is found at Ser354. The tract at residues 417 to 902 (TLQMPYQLFI…LRIKTVTFEY (486 aa)) is aldehyde dehydrogenase domain. Residues 571–573 (IPW) and 597–600 (KPAQ) each bind NADP(+). 2 positions are modified to phosphoserine: Ser629 and Ser631. Residues 630 to 635 (GSLVGQ) and 650 to 651 (GS) contribute to the NADP(+) site. Lys660 is subject to N6-succinyllysine. Catalysis depends on Glu673, which acts as the Proton acceptor. Residue 673 to 674 (EL) coordinates NADP(+). The active-site Proton donor is Cys707. Residue Lys757 participates in NADP(+) binding. Lys767 carries the N6-succinyllysine modification. 804–806 (ESF) serves as a coordination point for NADP(+). Ser825 is modified (phosphoserine). Lys882 bears the N6-acetyllysine mark.

In the N-terminal section; belongs to the GART family. The protein in the C-terminal section; belongs to the aldehyde dehydrogenase family. ALDH1L subfamily. As to quaternary structure, homotetramer. Post-translationally, phosphopantetheinylation at Ser-354 by AASDHPPT is required for the formyltetrahydrofolate dehydrogenase activity. Highly expressed in liver (at protein level). Also expressed in pancreas, brain and lung (at protein level).

It is found in the cytoplasm. The protein localises to the cytosol. The catalysed reaction is (6R)-10-formyltetrahydrofolate + NADP(+) + H2O = (6S)-5,6,7,8-tetrahydrofolate + CO2 + NADPH + H(+). Cytosolic 10-formyltetrahydrofolate dehydrogenase that catalyzes the NADP(+)-dependent conversion of 10-formyltetrahydrofolate to tetrahydrofolate and carbon dioxide. May also have an NADP(+)-dependent aldehyde dehydrogenase activity towards formaldehyde, acetaldehyde, propionaldehyde, and benzaldehyde. This is Cytosolic 10-formyltetrahydrofolate dehydrogenase from Mus musculus (Mouse).